A 301-amino-acid polypeptide reads, in one-letter code: Mitochondrial substrate carrier family protein X (301 aa).

Residues 1–23 (MVQQQQQQQQIKKNQVKPPLYSN) lie on the Mitochondrial intermembrane side of the membrane. 3 Solcar repeats span residues 18-109 (PPLY…FRTR), 117-199 (IKLW…MKHN), and 208-296 (IGLP…QKSF). A helical transmembrane segment spans residues 24–44 (LIAGAIAGVIGSSVVFPLDFV). The Mitochondrial matrix portion of the chain corresponds to 45–75 (KTRLQQQRVSIDGSKQYNGIIDCFKKVIKNE). Residues 76–97 (GGVRGLYRGLSSNLIGIIPEKA) traverse the membrane as a helical segment. At 98 to 122 (LKLAMNDYFRTRFQGDRSYIKLWEE) the chain is on the mitochondrial intermembrane side. Residues 123–143 (VASGGLAGMCQVVATNPMELV) traverse the membrane as a helical segment. The Mitochondrial matrix portion of the chain corresponds to 144 to 173 (KIRMQVSGLSGKKASLKEVVSELGIKGLYK). The chain crosses the membrane as a helical span at residues 174 to 194 (GTASTLLRDVPFSMIYFSIYG). Residues 195–207 (RMKHNLTDQETGE) are Mitochondrial intermembrane-facing. The helical transmembrane segment at 208-228 (IGLPKILLCGITAGSIAASVS) threads the bilayer. At 229-271 (TPFDVIKTRIQVKPGPNDPHYKGIADCFRKTIQSEGPKALFKG) the chain is on the mitochondrial matrix side. Residues 272–292 (VLPRVCIISPLFGITLVVYEI) traverse the membrane as a helical segment. The Mitochondrial intermembrane portion of the chain corresponds to 293 to 301 (QKSFYASTH).

The protein belongs to the mitochondrial carrier (TC 2.A.29) family.

It is found in the mitochondrion inner membrane. Mitochondrial solute carriers shuttle metabolites, nucleotides, and cofactors through the mitochondrial inner membrane. The sequence is that of Mitochondrial substrate carrier family protein X (mcfX) from Dictyostelium discoideum (Social amoeba).